The sequence spans 199 residues: MARCKS-related protein (199 aa).

Positions 1 to 199 (MGSQSSKAPR…PTPAGAEQNE (199 aa)) are disordered. The N-myristoyl glycine moiety is linked to residue glycine 2. Residue threonine 14 is modified to Phosphothreonine. The span at 16–26 (EEAAGASPAKA) shows a compositional bias: low complexity. A phosphoserine mark is found at serine 22, serine 36, and serine 48. Residues 53–64 (GTDEAAGATGDA) show a composition bias toward low complexity. Serine 71 carries the post-translational modification Phosphoserine. Over residues 76 to 85 (AKGDAPPKET) the composition is skewed to basic and acidic residues. Threonine 85 is modified (phosphothreonine). Basic residues predominate over residues 86 to 98 (PKKKKKFSFKKPF). The tract at residues 87–110 (KKKKKFSFKKPFKLSGLSFKRNRK) is effector domain involved in lipid-binding and calmodulin-binding. Residues serine 93, serine 101, and serine 104 each carry the phosphoserine; by PKC modification. A Phosphoserine modification is found at serine 119. A Phosphoserine; by MAPK8 modification is found at serine 120. Serine 135 bears the Phosphoserine mark. Threonine 148 is modified (phosphothreonine; by MAPK8). Residue serine 151 is modified to Phosphoserine. Low complexity predominate over residues 156-167 (AKGAEAGAACKG). Threonine 170 bears the Phosphothreonine mark. Low complexity predominate over residues 181 to 199 (STPSGPESGPTPAGAEQNE). Residue threonine 182 is modified to Phosphothreonine; by MAPK8. Residue threonine 191 is modified to Phosphothreonine.

It belongs to the MARCKS family. Binds to filamentous actin (F-actin), but not to monomeric G-actin, independently of its phosphorylation status. Interacts with calmodulin. Phosphorylated. Phosphorylation at Ser-120 and Thr-182 is non-redundantly catalyzed by MAPK8 in vivo. Phosphorylation at Thr-148 is preferentially catalyzed by MAPK8 in vivo, but this modification can also be catalyzed by other kinases in the absence of MAPK8. May be phosphorylated by protein kinase C, which disrupts the interaction with calmodulin.

The protein localises to the cytoplasm. The protein resides in the cytoskeleton. It is found in the cell membrane. Controls cell movement by regulating actin cytoskeleton homeostasis and filopodium and lamellipodium formation. When unphosphorylated, induces cell migration. When phosphorylated by MAPK8, induces actin bundles formation and stabilization, thereby reducing actin plasticity, hence restricting cell movement, including neuronal migration. May be involved in coupling the protein kinase C and calmodulin signal transduction systems. This Oryctolagus cuniculus (Rabbit) protein is MARCKS-related protein (MARCKSL1).